A 608-amino-acid polypeptide reads, in one-letter code: UvrABC system protein C (608 aa).

The region spanning 13 to 91 (HDPGVYRMFD…IKTFQPRYNV (79 aa)) is the GIY-YIG domain. One can recognise a UVR domain in the interval 201-236 (QQVLDHLIGKMERASRALNFEEAARYRDQIQAVRSV).

It belongs to the UvrC family. Interacts with UvrB in an incision complex.

The protein localises to the cytoplasm. In terms of biological role, the UvrABC repair system catalyzes the recognition and processing of DNA lesions. UvrC both incises the 5' and 3' sides of the lesion. The N-terminal half is responsible for the 3' incision and the C-terminal half is responsible for the 5' incision. The sequence is that of UvrABC system protein C from Mannheimia succiniciproducens (strain KCTC 0769BP / MBEL55E).